The primary structure comprises 258 residues: Trifolitoxin-processing protein TfxF (258 aa).

Its function is as follows. The actions of the proteins TfxB, TfxD and TfxF are implicated in the processing of the inactive trifolitoxin (TfxA) precursor into the active peptide. The polypeptide is Trifolitoxin-processing protein TfxF (tfxF) (Rhizobium leguminosarum bv. trifolii).